The sequence spans 150 residues: Large ribosomal subunit protein uL13 (150 aa).

The tract at residues 127 to 150 (KGTEHPHSAQKPQPLQLNPSATAK) is disordered. Over residues 136–150 (QKPQPLQLNPSATAK) the composition is skewed to polar residues.

It belongs to the universal ribosomal protein uL13 family. In terms of assembly, part of the 50S ribosomal subunit.

Functionally, this protein is one of the early assembly proteins of the 50S ribosomal subunit, although it is not seen to bind rRNA by itself. It is important during the early stages of 50S assembly. The polypeptide is Large ribosomal subunit protein uL13 (Synechococcus sp. (strain CC9902)).